The following is a 406-amino-acid chain: Methyltransferase cfoD (406 aa).

S-adenosyl-L-methionine contacts are provided by Asp-270 and Arg-312. Residue His-315 is the Proton acceptor of the active site.

The protein belongs to the class I-like SAM-binding methyltransferase superfamily. Cation-independent O-methyltransferase family.

The protein operates within secondary metabolite biosynthesis; flavonoid biosynthesis. Methyltransferase; part of the gene cluster that mediates the biosynthesis of chlorflavonin, a fungal flavonoid with acetolactate synthase inhibitory activity. Within the pathway, cfoD is responsible for the methylation at position C3-OH of flavonoid. The pathway begins with the PKS-NRPS hybrid synthetase cfoA that uses benzoic acid or p-hydroxybenzoic acid as a starter unit with four rounds of chain elongation using malonyl-CoA to form the chalcone skeleton. Then, a new type of chalcone isomerase, cfoK, catalyzes the conversion of the chalcone into a flavanone by a histidine-mediated oxa-Michael addition mechanism. The desaturation of flavanone to flavone is catalyzed by a new type of flavone synthase, the flavin mononucleotide (FMN)-dependent oxidoreductase cfoJ. Monooxygenases cfoF, cfoG, and P450 cfoH are responsible for the hydroxylation of the flavonoid skeleton at sites C3, C8, and C2', respectively. Like cfoF, the dehydratase cfoI also plays a role in the hydroxylation of position C3. Methyltransferases cfoB, cfoC, and cfoD then catalyze the methylation of C7-OH, C8-OH, and C3-OH, respectively. Finally, the monooxygenase cfoE is responsible for the chlorination of flavonoid at position C3'. The chain is Methyltransferase cfoD from Aspergillus candidus.